A 115-amino-acid chain; its full sequence is Mediator of RNA polymerase II transcription subunit 9 (115 aa).

The interval 1–31 (MATGGTVRPAEEPEEEEEEEDEAVEEEEEED) is disordered. A compositionally biased stretch (acidic residues) spans 12–31 (EPEEEEEEEDEAVEEEEEED). The stretch at 31–107 (DYTFLPLVHD…SELLQKYKSL (77 aa)) forms a coiled coil.

The protein belongs to the Mediator complex subunit 9 family. In terms of assembly, component of the Mediator complex.

The protein resides in the nucleus. Component of the Mediator complex, a coactivator involved in the regulated transcription of nearly all RNA polymerase II-dependent genes. Mediator functions as a bridge to convey information from gene-specific regulatory proteins to the basal RNA polymerase II transcription machinery. Mediator is recruited to promoters by direct interactions with regulatory proteins and serves as a scaffold for the assembly of a functional preinitiation complex with RNA polymerase II and the general transcription factors. The protein is Mediator of RNA polymerase II transcription subunit 9 (med9) of Xenopus laevis (African clawed frog).